A 211-amino-acid chain; its full sequence is ATP phosphoribosyltransferase (211 aa).

The protein belongs to the ATP phosphoribosyltransferase family. Short subfamily. Heteromultimer composed of HisG and HisZ subunits.

Its subcellular location is the cytoplasm. The enzyme catalyses 1-(5-phospho-beta-D-ribosyl)-ATP + diphosphate = 5-phospho-alpha-D-ribose 1-diphosphate + ATP. The protein operates within amino-acid biosynthesis; L-histidine biosynthesis; L-histidine from 5-phospho-alpha-D-ribose 1-diphosphate: step 1/9. In terms of biological role, catalyzes the condensation of ATP and 5-phosphoribose 1-diphosphate to form N'-(5'-phosphoribosyl)-ATP (PR-ATP). Has a crucial role in the pathway because the rate of histidine biosynthesis seems to be controlled primarily by regulation of HisG enzymatic activity. This Pseudomonas putida (strain W619) protein is ATP phosphoribosyltransferase.